The sequence spans 144 residues: Large ribosomal subunit protein uL15 (144 aa).

Residues 1–60 form a disordered region; it reads MRLNSLRPAAGSRPDANRVGRGAGTGNGKTAGRGHKGQHSRSGGFTKVGFEGGQMPLQRR. Positions 21 to 31 are enriched in gly residues; the sequence is RGAGTGNGKTA.

Belongs to the universal ribosomal protein uL15 family. Part of the 50S ribosomal subunit.

Functionally, binds to the 23S rRNA. The chain is Large ribosomal subunit protein uL15 from Alkalilimnicola ehrlichii (strain ATCC BAA-1101 / DSM 17681 / MLHE-1).